We begin with the raw amino-acid sequence, 86 residues long: UPF0297 protein LCABL_08470 (86 aa).

It belongs to the UPF0297 family.

The chain is UPF0297 protein LCABL_08470 from Lacticaseibacillus casei (strain BL23) (Lactobacillus casei).